A 378-amino-acid chain; its full sequence is Erythronate-4-phosphate dehydrogenase (378 aa).

2 residues coordinate substrate: S45 and T66. NAD(+) is bound by residues D146 and T175. Residue R208 is part of the active site. D232 is an NAD(+) binding site. The active site involves E237. H254 serves as the catalytic Proton donor. G257 serves as a coordination point for NAD(+). A substrate-binding site is contributed by Y258.

The protein belongs to the D-isomer specific 2-hydroxyacid dehydrogenase family. PdxB subfamily. Homodimer.

It is found in the cytoplasm. It carries out the reaction 4-phospho-D-erythronate + NAD(+) = (R)-3-hydroxy-2-oxo-4-phosphooxybutanoate + NADH + H(+). It functions in the pathway cofactor biosynthesis; pyridoxine 5'-phosphate biosynthesis; pyridoxine 5'-phosphate from D-erythrose 4-phosphate: step 2/5. Its function is as follows. Catalyzes the oxidation of erythronate-4-phosphate to 3-hydroxy-2-oxo-4-phosphonooxybutanoate. In Escherichia coli (strain K12 / MC4100 / BW2952), this protein is Erythronate-4-phosphate dehydrogenase.